A 157-amino-acid polypeptide reads, in one-letter code: Probable Brix domain-containing ribosomal biogenesis protein (157 aa).

In terms of domain architecture, Brix spans 1–157; that stretch reads MLVTSSRKPS…KLNLRGFKKY (157 aa).

Its function is as follows. Probably involved in the biogenesis of the ribosome. This Methanosarcina barkeri (strain Fusaro / DSM 804) protein is Probable Brix domain-containing ribosomal biogenesis protein.